The chain runs to 351 residues: uncharacterized protein (351 aa).

Mn(2+)-binding residues include Asp-215, Asp-226, His-290, Glu-319, and Glu-333.

It belongs to the peptidase M24B family. Mn(2+) is required as a cofactor.

This is an uncharacterized protein from Staphylococcus haemolyticus (strain JCSC1435).